A 285-amino-acid polypeptide reads, in one-letter code: MARNAEKAMTALARFRQAQLEEGKVKERRPFLASECTELPKAEKWRRQIIGEISKKVAQIQNAGLGEFRIRDLNDEINKLLREKGHWEVRIKELGGPDYGKVGPKMLDHEGKEVPGNRGYKYFGAAKDLPGVRELFEKEPLPPPRKTRAELMKAIDFEYYGYLDEDDGVIVPLEQEYEKKLRAELVEKWKAEREARLARGEKEEEEEEEEEINIYAVTEEESDEEGSQEKGGDDSQQKFIAHVPVPSQQEIEEALVRRKKMELLQKYASETLQAQSEEARRLLGY.

N6-acetyllysine is present on K127. The segment at 194–244 (EARLARGEKEEEEEEEEEINIYAVTEEESDEEGSQEKGGDDSQQKFIAHVP) is disordered. Acidic residues predominate over residues 203 to 226 (EEEEEEEEEINIYAVTEEESDEEG). Residues 227-236 (SQEKGGDDSQ) show a composition bias toward basic and acidic residues. Phosphoserine is present on S247.

This sequence belongs to the ISY1 family. In terms of assembly, identified in the spliceosome C complex. Component of the XAB2 complex, a multimeric protein complex composed of XAB2, PRPF19, AQR, ZNF830, ISY1, and PPIE. Identified in a pentameric intron-binding (IB) complex composed of AQR, XAB2, ISY1, ZNF830 and PPIE that is incorporated into the spliceosome as a preassembled complex. The IB complex does not contain PRPF19. Interacts with CPSF3; this interaction is in an RNA independent manner. Interacts with the microprocessor complex subunits DGCR8 and DROSHA; this interaction is in an RNA dependent manner.

The protein localises to the nucleus. Functionally, component of the spliceosome C complex required for the selective processing of microRNAs during embryonic stem cell differentiation. Required for the biogenesis of all miRNAs from the pri-miR-17-92 primary transcript except miR-92a. Only required for the biogenesis of miR-290 and miR-96 from the pri-miR-290-295 and pri-miR-96-183 primary transcripts, respectively. Required during the transition of embryonic stem cells (ESCs) from the naive to primed state. By enhancing miRNA biogenesis, promotes exit of ESCs from the naive state to an intermediate state of poised pluripotency, which precedes transition to the primed state. Involved in pre-mRNA splicing as component of the spliceosome. The chain is Pre-mRNA-splicing factor ISY1 homolog (ISY1) from Homo sapiens (Human).